The following is an 818-amino-acid chain: H(+)/Cl(-) exchange transporter 3 (818 aa).

At 1 to 125 (MESEQLFHRG…WEMTKSLYDA (125 aa)) the chain is on the cytoplasmic side. Residues 13-17 (RNSYN) carry the Di-leucine internalization motif; mediates targeting to late endosome and lysosome membranes motif. Residues 18 to 19 (SI) carry the IP motif; mediates targeting to recycling endosomes motif. 3 short sequence motifs (di-leucine internalization motif; mediates targeting to late endosome and lysosome membranes) span residues 28 to 29 (LL), 46 to 47 (LL), and 71 to 75 (LLDLL). The chain crosses the membrane as a helical span at residues 126–163 (WSGWLVVTLTGLASGALAGLIDIAADWMTDLKEGICLS). Asn177 is a glycosylation site (N-linked (GlcNAc...) asparagine). Residues 209-232 (MNYIMYIFWALSFAFLAVSLVKVF) traverse the membrane as a helical segment. The Selectivity filter part_1 motif lies at 238-242 (GSGIP). A chloride-binding site is contributed by Ser239. Residues 241-248 (IPEIKTIL) constitute an intramembrane region (helical). 2 helical membrane passes run 258–276 (GKWTLMIKTITLVLAVASG) and 282–301 (EGPLVHVACCCGNIFSYLFP). Positions 280–284 (GKEGP) match the Selectivity filter part_2 motif. 2 intramembrane regions (helical) span residues 313–325 (VLSAASAAGVSVA) and 329–337 (PIGGVLFSL). The next 3 helical transmembrane spans lie at 349–367 (LWRSFFAALVAAFVLRSIN), 391–416 (FPFILLGVFGGLWGAFFIRANIAWCR), and 423–443 (FGKYPVLEVIIVAAITAVIAF). N-linked (GlcNAc...) asparagine glycosylation is found at Asn451 and Asn479. 2 helical membrane-spanning segments follow: residues 500-520 (IWQLCLALIFKIIMTVFTFGI) and 525-544 (GLFIPSMAIGAIAGRIVGIA). Residues 525–529 (GLFIP) carry the Selectivity filter part_3 motif. Phe527 is a chloride binding site. Intramembrane regions (helical) lie at residues 572-586 (GLYAMVGAAACLGGV) and 590-601 (TVSLVVIVFELT). Residues 602 to 605 (GGLE) constitute an intramembrane region (note=Loop between two helices). Residues 606–624 (YIVPLMAAVMTSKWVGDAF) form a helical membrane-spanning segment. The Cytoplasmic portion of the chain corresponds to 625–818 (GREGIYEAHI…NQDPASIMFN (194 aa)). Chloride is bound at residue Tyr630. CBS domains lie at 658–722 (MRPR…ARKK) and 755–812 (LDMS…NQDP). ATP contacts are provided by residues 689–691 (YNG) and 796–799 (TKKD).

This sequence belongs to the chloride channel (TC 2.A.49) family. ClC-3/CLCN3 subfamily. Monomer and homodimer. Forms heterodimers with CLCN4. Post-translationally, N-glycosylated. In terms of tissue distribution, detected in kidney, in the apical part of proximal tubule cells (at protein level). Expressed at high levels in the kidney while a low level expression is seen in the brain. Within the brain, it is prominent in the hippocampus, cerebral cortex and olfactory bulb. Brain, pancreas, kidney, liver, lung, retina, olfactory bulb, and spinal cord. As to expression, pancreas, kidney, liver, lung and retina. In terms of tissue distribution, brain, heart, pancreas, kidney, liver, lung, retina, olfactory bulb, and spinal cord. Expressed at high levels in the liver and at low levels in the brain.

It localises to the cytoplasmic vesicle. It is found in the secretory vesicle membrane. Its subcellular location is the lysosome membrane. The protein resides in the late endosome membrane. The protein localises to the cell membrane. It localises to the early endosome membrane. It is found in the recycling endosome membrane. Its activity is regulated as follows. Inhibited by Cd(2+). In terms of biological role, may influence large dense-core vesicle exocytosis in adrenal chromaffin cells. Strongly outwardly rectifying, electrogenic H(+)/Cl(-)exchanger which mediates the exchange of chloride ions against protons. The CLC channel family contains both chloride channels and proton-coupled anion transporters that exchange chloride or another anion for protons. The presence of conserved gating glutamate residues is typical for family members that function as antiporters. Its function is as follows. Strongly outwardly rectifying, electrogenic H(+)/Cl(-)exchanger which mediates the exchange of chloride ions against protons. Facilitates endosomal acidification and chloride accumulation in hepatocytes. Functionally, strongly outwardly rectifying, electrogenic H(+)/Cl(-)exchanger which mediates the exchange of chloride ions against protons. This is H(+)/Cl(-) exchange transporter 3 (Clcn3) from Mus musculus (Mouse).